We begin with the raw amino-acid sequence, 88 residues long: Large ribosomal subunit protein bL27 (88 aa).

The interval 1-21 (MAHKKGASSSRNGRDSAAQRL) is disordered.

This sequence belongs to the bacterial ribosomal protein bL27 family.

This Mycobacterium marinum (strain ATCC BAA-535 / M) protein is Large ribosomal subunit protein bL27.